The primary structure comprises 266 residues: MAERQNIFFYYHPDEEMDGKVKALKKISSENGLNVVENSSDASIIVSIGGDGTFLQAVRKTGFRQDCIYTGIMREGQSGLYCDFNIDNFDNMIHSVLHEDLEVRRFPTIKVQINGETPFYCLNEVSIRSTIVKTIVINVCVDGFHFETFRGDGMIVSTPTGSTGYSKSARGAVIDPLIHGFQVSEVASLNNNQYRTLGSSFLLNKDRKLELEILQDGNDHPIISLDNEASPIKRIQNIDVTMDETIIKTVKLKNNSYWERVKRTFL.

Asp51 acts as the Proton acceptor in catalysis. NAD(+) is bound by residues 51–52, 123–124, Arg150, Asp152, 163–168, and Ala187; these read DG, NE, and TGYSKS.

It belongs to the NAD kinase family. A divalent metal cation serves as cofactor.

It is found in the cytoplasm. It carries out the reaction NAD(+) + ATP = ADP + NADP(+) + H(+). Its function is as follows. Involved in the regulation of the intracellular balance of NAD and NADP, and is a key enzyme in the biosynthesis of NADP. Catalyzes specifically the phosphorylation on 2'-hydroxyl of the adenosine moiety of NAD to yield NADP. In Oceanobacillus iheyensis (strain DSM 14371 / CIP 107618 / JCM 11309 / KCTC 3954 / HTE831), this protein is NAD kinase 2.